The following is a 794-amino-acid chain: FT-interacting protein 1 (794 aa).

Residues 1–27 (MAAKDGAKSQEDYKLKDMKPELGERWP) show a composition bias toward basic and acidic residues. The segment at 1 to 34 (MAAKDGAKSQEDYKLKDMKPELGERWPHGGQRGG) is disordered. C2 domains follow at residues 37-158 (WIGS…PQWY), 198-321 (VQGE…SKWY), and 364-492 (YISD…THSY). Residues Asp76, Asp123, Glu125, and Glu131 each contribute to the Ca(2+) site. 4 helical membrane passes run 510–532 (LAVR…PLLP), 595–615 (IVSV…VCYW), 619–639 (LTTI…ELIL), and 737–757 (LFVI…FKII).

This sequence belongs to the MCTP family. As to quaternary structure, interacts with FT in phloem companion cells. Requires Ca(2+) as cofactor. Expressed in the vascular tissues of roots, cotyledons and rosette leaves. Specifically located in the phloem including companion cells. Observed in flowers. Not detected in the shoot apical meristem.

It is found in the endoplasmic reticulum membrane. Its subcellular location is the cell junction. The protein resides in the plasmodesma. Its function is as follows. Involved in the export of FT from the phloem companion cells to the sieve elements through the plasmodesmata. Regulates flowering time under long days. May function as a signaling molecule by regulating the trafficking of other regulators. The chain is FT-interacting protein 1 from Arabidopsis thaliana (Mouse-ear cress).